Consider the following 254-residue polypeptide: Insulin-like growth factor-binding protein 4 (254 aa).

Positions 1–21 are cleaved as a signal peptide; it reads MLPFGLVAALLLAAGPRPSLG. The IGFBP N-terminal domain occupies 23–103; sequence EAIHCPPCSE…MHGQGVCTEL (81 aa). Intrachain disulfides connect cysteine 27–cysteine 53, cysteine 30–cysteine 55, cysteine 38–cysteine 56, cysteine 44–cysteine 59, cysteine 67–cysteine 80, and cysteine 74–cysteine 100. Residue asparagine 125 is glycosylated (N-linked (GlcNAc...) asparagine). Cysteine 131 and cysteine 138 are oxidised to a cystine. The interval 149–169 is disordered; it reads RSKMKVVGTPREEPRPVPQGS. Residues 167 to 245 enclose the Thyroglobulin type-1 domain; that stretch reads QGSCQSELHR…GLEPKGELDC (79 aa). 3 disulfide bridges follow: cysteine 170/cysteine 200, cysteine 211/cysteine 222, and cysteine 224/cysteine 245. A Phosphoserine modification is found at serine 251.

As to quaternary structure, binds IGF2 more than IGF1.

The protein resides in the secreted. Functionally, IGF-binding proteins prolong the half-life of the IGFs and have been shown to either inhibit or stimulate the growth promoting effects of the IGFs on cell culture. They alter the interaction of IGFs with their cell surface receptors. The polypeptide is Insulin-like growth factor-binding protein 4 (Igfbp4) (Rattus norvegicus (Rat)).